We begin with the raw amino-acid sequence, 507 residues long: Sensor protein CseC (507 aa).

Residues 1 to 42 are disordered; the sequence is MRGFFRQRRSVSPPGHPYDRTGPGEHAGPGARTGPGGRPRVL. Residues 25-37 are compositionally biased toward gly residues; that stretch reads EHAGPGARTGPGG. A run of 2 helical transmembrane segments spans residues 60 to 80 and 183 to 203; these read LSAA…LVVH and ALVI…VLIG. Residues 204–260 form the HAMP domain; it reads GQLSRRLREAAAAANRVASGEPDVRVRDAIGGVVRDETDDVARAVDAMADALQQRIE. One can recognise a Histidine kinase domain in the interval 268–470; that stretch reads DIAHELRTPV…VAVLWLPEHA (203 aa). His-271 carries the phosphohistidine; by autocatalysis modification. A disordered region spans residues 472–507; the sequence is TNTGSYPMLPDRSKSGASSSARDMSREASQGMSRKP. Residues 486–507 show a composition bias toward polar residues; it reads SGASSSARDMSREASQGMSRKP.

The protein resides in the cell membrane. It carries out the reaction ATP + protein L-histidine = ADP + protein N-phospho-L-histidine.. Its function is as follows. Member of the two-component regulatory system CseB/CseC involved in the stability of the cell envelope, through activation of transcription of RNA polymerase sigma-E factor. CseC functions as a membrane-associated protein kinase that phosphorylates CseB in response to changes in the cell envelope. This chain is Sensor protein CseC (cseC), found in Streptomyces coelicolor (strain ATCC BAA-471 / A3(2) / M145).